We begin with the raw amino-acid sequence, 184 residues long: Ribose 1,5-bisphosphate phosphokinase PhnN (184 aa).

Residue Gly11–Asp18 participates in ATP binding.

It belongs to the ribose 1,5-bisphosphokinase family.

The catalysed reaction is alpha-D-ribose 1,5-bisphosphate + ATP = 5-phospho-alpha-D-ribose 1-diphosphate + ADP. It functions in the pathway metabolic intermediate biosynthesis; 5-phospho-alpha-D-ribose 1-diphosphate biosynthesis; 5-phospho-alpha-D-ribose 1-diphosphate from D-ribose 5-phosphate (route II): step 3/3. Its function is as follows. Catalyzes the phosphorylation of ribose 1,5-bisphosphate to 5-phospho-D-ribosyl alpha-1-diphosphate (PRPP). The protein is Ribose 1,5-bisphosphate phosphokinase PhnN of Burkholderia pseudomallei (strain K96243).